Here is a 417-residue protein sequence, read N- to C-terminus: 4-hydroxy-3-methylbut-2-en-1-yl diphosphate synthase (flavodoxin) (417 aa).

[4Fe-4S] cluster-binding residues include Cys-305, Cys-308, Cys-351, and Glu-358.

The protein belongs to the IspG family. The cofactor is [4Fe-4S] cluster.

It catalyses the reaction (2E)-4-hydroxy-3-methylbut-2-enyl diphosphate + oxidized [flavodoxin] + H2O + 2 H(+) = 2-C-methyl-D-erythritol 2,4-cyclic diphosphate + reduced [flavodoxin]. It participates in isoprenoid biosynthesis; isopentenyl diphosphate biosynthesis via DXP pathway; isopentenyl diphosphate from 1-deoxy-D-xylulose 5-phosphate: step 5/6. Its function is as follows. Converts 2C-methyl-D-erythritol 2,4-cyclodiphosphate (ME-2,4cPP) into 1-hydroxy-2-methyl-2-(E)-butenyl 4-diphosphate. The chain is 4-hydroxy-3-methylbut-2-en-1-yl diphosphate synthase (flavodoxin) from Nitrosomonas europaea (strain ATCC 19718 / CIP 103999 / KCTC 2705 / NBRC 14298).